Reading from the N-terminus, the 930-residue chain is Vacuolar membrane protease (930 aa).

The interval 1-28 is disordered; sequence MPQEEVHDTSSVSDDNLTNTGGGGSNYY. Residues 1-49 are Cytoplasmic-facing; it reads MPQEEVHDTSSVSDDNLTNTGGGGSNYYNSHNQPNVFVRAIRSIFGYRK. The helical transmembrane segment at 50-70 threads the bilayer; the sequence is TSLTLFVILTIIFTIALSLYD. Topologically, residues 71 to 379 are vacuolar; it reads NNLDLTIELP…YFFSSPISAL (309 aa). Asn163 carries N-linked (GlcNAc...) asparagine glycosylation. Residues His177 and Asp189 each coordinate Zn(2+). Glu222 (proton acceptor) is an active-site residue. The Zn(2+) site is built by Glu223, Glu248, and His320. A glycan (N-linked (GlcNAc...) asparagine) is linked at Asn354. A helical transmembrane segment spans residues 380–400; sequence VTINSVLIVLFPILSGPLLFI. The Cytoplasmic portion of the chain corresponds to 401-411; sequence TVRYKKWKIGT. A helical membrane pass occupies residues 412–432; the sequence is SNFLSLPLAIVLTVAIVMIVV. Residues 433–449 lie on the Vacuolar side of the membrane; the sequence is NQGFQIANPFLPSSHPL. The helical transmembrane segment at 450 to 470 threads the bilayer; it reads LLVATTTSISLLIYYVFLNGV. The Cytoplasmic segment spans residues 471–480; that stretch reads NWVSPSGDQK. Residues 481-501 traverse the membrane as a helical segment; it reads LITIIEISFIYWLILIYVTHG. The Vacuolar segment spans residues 502-514; it reads LSQNKIGDDHTGE. The helical transmembrane segment at 515–535 threads the bilayer; that stretch reads FPFTVLFFLEATASLFGLIGW. Residues 536 to 598 lie on the Cytoplasmic side of the membrane; it reads TFSRSIKQSS…FGYDWSLQYL (63 aa). The segment at 542–570 is disordered; it reads KQSSNDGSDEPLLTGTAERYGSDDTDEDE. A helical transmembrane segment spans residues 599 to 619; that stretch reads LIVPISSLIIFNSGWLVLDGI. An N-linked (GlcNAc...) asparagine glycan is attached at Asn620. Residues 620 to 631 are Vacuolar-facing; the sequence is NKSIQESFAAEN. Residues 632–652 traverse the membrane as a helical segment; sequence LIYLLIQLFSQFWILPILPFV. The Cytoplasmic segment spans residues 653–657; sequence YKLNR. The helical transmembrane segment at 658-678 threads the bilayer; the sequence is FIVFGLTIFAISGVALISFLD. Over 679–930 the chain is Vacuolar; the sequence is PFNQENPLKL…LVSVSLKIEV (252 aa). N-linked (GlcNAc...) asparagine glycosylation is found at Asn697, Asn768, Asn808, and Asn890.

Belongs to the peptidase M28 family. Requires Zn(2+) as cofactor.

Its subcellular location is the vacuole membrane. In terms of biological role, may be involved in vacuolar sorting and osmoregulation. This chain is Vacuolar membrane protease, found in Candida dubliniensis (strain CD36 / ATCC MYA-646 / CBS 7987 / NCPF 3949 / NRRL Y-17841) (Yeast).